A 263-amino-acid polypeptide reads, in one-letter code: MLTFPRIDPVAITLGPLQFRWYGLMYLFGFLSGWWLGRRRAAQPGSRWTGEMVDDMVTYVILGVVLGGRIGYILFYDLAYYLGNPTQIFSIWNGGMSFHGGLLGVVFAMWLLGRRNGLGFMDVSDFVAPLIPPGLFFGRIGNFINGELWGKHTTLPWGMVFPDGGPFPRHPSQLYECALEGVILFLALWVFSSRKRPTGHVSGLFALLYGVFRFTVEFVREPDVQLGYLAFGWLTMGQVLCLPLIMLGLWLLRPGGDKGTKAA.

4 helical membrane-spanning segments follow: residues 10–30, 56–76, 91–111, and 117–137; these read VAIT…LFGF, MVTY…ILFY, IWNG…AMWL, and GLGF…GLFF. Arginine 139 is a binding site for a 1,2-diacyl-sn-glycero-3-phospho-(1'-sn-glycerol). A run of 3 helical transmembrane segments spans residues 171 to 191, 199 to 219, and 231 to 251; these read PSQL…LWVF, GHVS…VEFV, and FGWL…GLWL.

Belongs to the Lgt family.

The protein localises to the cell inner membrane. The catalysed reaction is L-cysteinyl-[prolipoprotein] + a 1,2-diacyl-sn-glycero-3-phospho-(1'-sn-glycerol) = an S-1,2-diacyl-sn-glyceryl-L-cysteinyl-[prolipoprotein] + sn-glycerol 1-phosphate + H(+). Its pathway is protein modification; lipoprotein biosynthesis (diacylglyceryl transfer). Its function is as follows. Catalyzes the transfer of the diacylglyceryl group from phosphatidylglycerol to the sulfhydryl group of the N-terminal cysteine of a prolipoprotein, the first step in the formation of mature lipoproteins. This Nitratidesulfovibrio vulgaris (strain ATCC 29579 / DSM 644 / CCUG 34227 / NCIMB 8303 / VKM B-1760 / Hildenborough) (Desulfovibrio vulgaris) protein is Phosphatidylglycerol--prolipoprotein diacylglyceryl transferase.